We begin with the raw amino-acid sequence, 207 residues long: Ribosomal RNA large subunit methyltransferase E (207 aa).

The interval 1-20 (MKRDPTKGRKTPDHYARKAK) is disordered. S-adenosyl-L-methionine contacts are provided by G56, W58, D76, D94, and D116. The active-site Proton acceptor is K156.

The protein belongs to the class I-like SAM-binding methyltransferase superfamily. RNA methyltransferase RlmE family.

The protein localises to the cytoplasm. It carries out the reaction uridine(2552) in 23S rRNA + S-adenosyl-L-methionine = 2'-O-methyluridine(2552) in 23S rRNA + S-adenosyl-L-homocysteine + H(+). Specifically methylates the uridine in position 2552 of 23S rRNA at the 2'-O position of the ribose in the fully assembled 50S ribosomal subunit. The polypeptide is Ribosomal RNA large subunit methyltransferase E (Desulfosudis oleivorans (strain DSM 6200 / JCM 39069 / Hxd3) (Desulfococcus oleovorans)).